The primary structure comprises 192 residues: Ribosomal RNA large subunit methyltransferase E (192 aa).

Glycine 48, phenylalanine 50, aspartate 67, aspartate 85, and aspartate 107 together coordinate S-adenosyl-L-methionine. Lysine 147 functions as the Proton acceptor in the catalytic mechanism.

It belongs to the class I-like SAM-binding methyltransferase superfamily. RNA methyltransferase RlmE family.

The protein localises to the cytoplasm. The enzyme catalyses uridine(2552) in 23S rRNA + S-adenosyl-L-methionine = 2'-O-methyluridine(2552) in 23S rRNA + S-adenosyl-L-homocysteine + H(+). Functionally, specifically methylates the uridine in position 2552 of 23S rRNA at the 2'-O position of the ribose in the fully assembled 50S ribosomal subunit. The protein is Ribosomal RNA large subunit methyltransferase E of Borrelia garinii subsp. bavariensis (strain ATCC BAA-2496 / DSM 23469 / PBi) (Borreliella bavariensis).